The primary structure comprises 606 residues: Glutamine--fructose-6-phosphate aminotransferase [isomerizing] (606 aa).

Catalysis depends on Cys2, which acts as the Nucleophile; for GATase activity. One can recognise a Glutamine amidotransferase type-2 domain in the interval 2-217; the sequence is CGIIGIVGKE…EGDYVALDHD (216 aa). SIS domains lie at 280-421 and 454-596; these read VPGD…ARGT and IAAD…VDQP. The For Fru-6P isomerization activity role is filled by Lys601.

Homodimer.

The protein localises to the cytoplasm. The catalysed reaction is D-fructose 6-phosphate + L-glutamine = D-glucosamine 6-phosphate + L-glutamate. In terms of biological role, catalyzes the first step in hexosamine metabolism, converting fructose-6P into glucosamine-6P using glutamine as a nitrogen source. The polypeptide is Glutamine--fructose-6-phosphate aminotransferase [isomerizing] (Caulobacter vibrioides (strain ATCC 19089 / CIP 103742 / CB 15) (Caulobacter crescentus)).